The sequence spans 206 residues: LexA repressor (206 aa).

The segment at residues 28-48 is a DNA-binding region (H-T-H motif); that stretch reads VREIGQAVGLASSSTVHGHLS. Active-site for autocatalytic cleavage activity residues include Ser128 and Lys166.

It belongs to the peptidase S24 family. As to quaternary structure, homodimer.

The enzyme catalyses Hydrolysis of Ala-|-Gly bond in repressor LexA.. Its function is as follows. Represses a number of genes involved in the response to DNA damage (SOS response), including recA and lexA. In the presence of single-stranded DNA, RecA interacts with LexA causing an autocatalytic cleavage which disrupts the DNA-binding part of LexA, leading to derepression of the SOS regulon and eventually DNA repair. The protein is LexA repressor of Bacillus thuringiensis (strain Al Hakam).